Here is a 218-residue protein sequence, read N- to C-terminus: Large ribosomal subunit protein uL3 (218 aa).

It belongs to the universal ribosomal protein uL3 family. As to quaternary structure, part of the 50S ribosomal subunit. Forms a cluster with proteins L14 and L19.

In terms of biological role, one of the primary rRNA binding proteins, it binds directly near the 3'-end of the 23S rRNA, where it nucleates assembly of the 50S subunit. The sequence is that of Large ribosomal subunit protein uL3 from Corynebacterium efficiens (strain DSM 44549 / YS-314 / AJ 12310 / JCM 11189 / NBRC 100395).